A 418-amino-acid polypeptide reads, in one-letter code: Torsin-4A-B (418 aa).

Residues C128–I144 form a helical membrane-spanning segment. G200–S207 is an ATP binding site.

Belongs to the ClpA/ClpB family. Torsin subfamily.

The protein resides in the membrane. This chain is Torsin-4A-B (tor4a-b), found in Xenopus laevis (African clawed frog).